The primary structure comprises 615 residues: DNA mismatch repair protein MutL (615 aa).

The protein belongs to the DNA mismatch repair MutL/HexB family.

This protein is involved in the repair of mismatches in DNA. It is required for dam-dependent methyl-directed DNA mismatch repair. May act as a 'molecular matchmaker', a protein that promotes the formation of a stable complex between two or more DNA-binding proteins in an ATP-dependent manner without itself being part of a final effector complex. The protein is DNA mismatch repair protein MutL of Histophilus somni (strain 2336) (Haemophilus somnus).